Here is a 222-residue protein sequence, read N- to C-terminus: Transcriptional regulatory protein BasR (222 aa).

In terms of domain architecture, Response regulatory spans Lys2–Leu116. Asp51 is modified (4-aspartylphosphate). The segment at residues Glu124 to Ala218 is a DNA-binding region (ompR/PhoB-type).

As to quaternary structure, homodimer. In terms of processing, phosphorylated by BasS.

It is found in the cytoplasm. Functionally, member of the two-component regulatory system BasS/BasR. BasR induces the transcription of the ugd, ais, arnBCADTEF and eptA-basRS loci, all involved in resistance to polymyxin. The polypeptide is Transcriptional regulatory protein BasR (basR) (Escherichia coli (strain K12)).